We begin with the raw amino-acid sequence, 464 residues long: Non-structural protein NS-S (464 aa).

It belongs to the tospovirus NS-S protein family. Interacts with host MYC2.

In terms of biological role, multifunctional protein that plays two independent roles: viral suppressor of host RNAi (VSR) and viral inducer of host attractiveness to insect vectors (VIA). Acts as a suppressor of RNA-mediated gene silencing, also known as post-transcriptional gene silencing (PTGS), a mechanism of plant viral defense that limits the accumulation of viral RNAs. Also inhibits signal transduction by the phytohormone jasmonate, making the infected plant more attractive to aphids, which are the second host to play a role as a dissemination vector. Acts by binding to and inhibiting MYC2 transcription factor. This is Non-structural protein NS-S (NSS) from Frankliniella occidentalis (Western flower thrips).